We begin with the raw amino-acid sequence, 307 residues long: Melanoma-associated antigen F1 (307 aa).

Positions 1-55 (MLQTPESRGLPVPQAEGEKDGGHDGETRAPTASQERPKEELGAGREEGAAEPALT) are disordered. Composition is skewed to basic and acidic residues over residues 16-27 (EGEKDGGHDGET) and 35-48 (ERPKEELGAGREEG). An MAGE domain is found at 76 to 277 (LNRTVAELVQ…HWPVQYREAL (202 aa)).

As to quaternary structure, interacts (via MAGE domain) with RING-type zinc finger-containing E3 ubiquitin-protein ligases LNX1, TRIM27 and NSMCE1; the interaction is direct. As to expression, ubiquitous.

In terms of biological role, enhances ubiquitin ligase activity of RING-type zinc finger-containing E3 ubiquitin ligases. Proposed to act through recruitment and/or stabilization of the E2 ubiquitin-conjugating enzyme at the E3:substrate complex. MAGEF1-NSMCE1 ubiquitin ligase complex promotes proteasomal degradation of MMS19, a key component of the cytosolic iron-sulfur protein assembly (CIA) machinery. Down-regulation of MMS19 impairs the activity of several DNA repair and metabolism enzymes such as ERCC2/XPD, FANCJ, RTEL1 and POLD1 that require iron-sulfur clusters as cofactors. May negatively regulate genome integrity by inhibiting homologous recombination-mediated double-strand break DNA repair. This Homo sapiens (Human) protein is Melanoma-associated antigen F1.